We begin with the raw amino-acid sequence, 354 residues long: Methylthioribose-1-phosphate isomerase (354 aa).

Substrate is bound by residues 45-47, Arg87, and Gln204; that span reads RGA. Asp245 acts as the Proton donor in catalysis. 255-256 contributes to the substrate binding site; the sequence is NK.

Belongs to the eIF-2B alpha/beta/delta subunits family. MtnA subfamily.

It carries out the reaction 5-(methylsulfanyl)-alpha-D-ribose 1-phosphate = 5-(methylsulfanyl)-D-ribulose 1-phosphate. The protein operates within amino-acid biosynthesis; L-methionine biosynthesis via salvage pathway; L-methionine from S-methyl-5-thio-alpha-D-ribose 1-phosphate: step 1/6. In terms of biological role, catalyzes the interconversion of methylthioribose-1-phosphate (MTR-1-P) into methylthioribulose-1-phosphate (MTRu-1-P). The protein is Methylthioribose-1-phosphate isomerase of Chlorobaculum tepidum (strain ATCC 49652 / DSM 12025 / NBRC 103806 / TLS) (Chlorobium tepidum).